The chain runs to 141 residues: Large ribosomal subunit protein uL11 (141 aa).

This sequence belongs to the universal ribosomal protein uL11 family. Part of the ribosomal stalk of the 50S ribosomal subunit. Interacts with L10 and the large rRNA to form the base of the stalk. L10 forms an elongated spine to which L12 dimers bind in a sequential fashion forming a multimeric L10(L12)X complex. In terms of processing, one or more lysine residues are methylated.

Functionally, forms part of the ribosomal stalk which helps the ribosome interact with GTP-bound translation factors. The polypeptide is Large ribosomal subunit protein uL11 (Chlorobium phaeobacteroides (strain DSM 266 / SMG 266 / 2430)).